The following is a 1117-amino-acid chain: RNA-directed RNA polymerase (1117 aa).

Residues 1–17 (MTVSGRSSWQNGKTTNA) show a composition bias toward polar residues. The disordered stretch occupies residues 1–23 (MTVSGRSSWQNGKTTNAMRAGKL).

It catalyses the reaction RNA(n) + a ribonucleoside 5'-triphosphate = RNA(n+1) + diphosphate. Its function is as follows. RNA-dependent RNA polymerase which replicates the viral genome. This is RNA-directed RNA polymerase (p1) from Penicillium chrysogenum (Penicillium notatum).